Reading from the N-terminus, the 356-residue chain is S-adenosylmethionine:tRNA ribosyltransferase-isomerase (356 aa).

It belongs to the QueA family. Monomer.

The protein localises to the cytoplasm. The catalysed reaction is 7-aminomethyl-7-carbaguanosine(34) in tRNA + S-adenosyl-L-methionine = epoxyqueuosine(34) in tRNA + adenine + L-methionine + 2 H(+). It participates in tRNA modification; tRNA-queuosine biosynthesis. In terms of biological role, transfers and isomerizes the ribose moiety from AdoMet to the 7-aminomethyl group of 7-deazaguanine (preQ1-tRNA) to give epoxyqueuosine (oQ-tRNA). The protein is S-adenosylmethionine:tRNA ribosyltransferase-isomerase of Enterobacter sp. (strain 638).